The sequence spans 196 residues: Ribosome maturation factor RimP (196 aa).

Positions 164 to 196 (LAPQKPNKPGPKKPGHEKKKPSNESAAGKPRAE) are disordered. The segment covering 173 to 182 (GPKKPGHEKK) has biased composition (basic residues).

This sequence belongs to the RimP family.

The protein resides in the cytoplasm. In terms of biological role, required for maturation of 30S ribosomal subunits. This is Ribosome maturation factor RimP from Xanthomonas euvesicatoria pv. vesicatoria (strain 85-10) (Xanthomonas campestris pv. vesicatoria).